We begin with the raw amino-acid sequence, 437 residues long: Trigger factor (437 aa).

Residues 161–246 enclose the PPIase FKBP-type domain; it reads GDRVNIDFKG…VNKVEGKALP (86 aa).

The protein belongs to the FKBP-type PPIase family. Tig subfamily.

Its subcellular location is the cytoplasm. The catalysed reaction is [protein]-peptidylproline (omega=180) = [protein]-peptidylproline (omega=0). Involved in protein export. Acts as a chaperone by maintaining the newly synthesized protein in an open conformation. Functions as a peptidyl-prolyl cis-trans isomerase. This chain is Trigger factor, found in Alcanivorax borkumensis (strain ATCC 700651 / DSM 11573 / NCIMB 13689 / SK2).